We begin with the raw amino-acid sequence, 322 residues long: tRNA uridine(34) hydroxylase (322 aa).

A Rhodanese domain is found at 125–219 (QDPNTIVIDA…YGKDPEVQGK (95 aa)). Cys-179 serves as the catalytic Cysteine persulfide intermediate.

The protein belongs to the TrhO family.

It catalyses the reaction uridine(34) in tRNA + AH2 + O2 = 5-hydroxyuridine(34) in tRNA + A + H2O. Its function is as follows. Catalyzes oxygen-dependent 5-hydroxyuridine (ho5U) modification at position 34 in tRNAs. The chain is tRNA uridine(34) hydroxylase from Bacillus subtilis (strain 168).